The sequence spans 420 residues: F-box protein At5g07610 (420 aa).

The segment at 1 to 25 (MSSCSRTRTKAPRSARSRRNGGFSS) is disordered. A compositionally biased stretch (basic residues) spans 7-19 (TRTKAPRSARSRR). One can recognise an F-box domain in the interval 27-77 (SATIVADIDDVLIQILSFLPIKTLLRFKRVSKRWLSLITNPVFSNRVIKSN).

The sequence is that of F-box protein At5g07610 from Arabidopsis thaliana (Mouse-ear cress).